The primary structure comprises 475 residues: UDP-N-acetylmuramate--L-alanine ligase (475 aa).

125-131 (GTHGKTT) provides a ligand contact to ATP.

This sequence belongs to the MurCDEF family.

Its subcellular location is the cytoplasm. The catalysed reaction is UDP-N-acetyl-alpha-D-muramate + L-alanine + ATP = UDP-N-acetyl-alpha-D-muramoyl-L-alanine + ADP + phosphate + H(+). Its pathway is cell wall biogenesis; peptidoglycan biosynthesis. Its function is as follows. Cell wall formation. The chain is UDP-N-acetylmuramate--L-alanine ligase from Haemophilus influenzae (strain PittGG).